Here is a 616-residue protein sequence, read N- to C-terminus: MKQSKMLIPTLREMPSDAQVISHALLMRAGYVRQVSAGIYAYLPLANRVLEKLKNIMREEFDEIGAVELLAPSLLTADLWRESGRYETYGEDLYKLKNRDSSDFILGPTHEETMTSLVRDEITSYKKLPLNVYQIATKFRDEKRPRYGLLRGREFLMKDGYSYHADQDSLDETYLDYKKAYEKIFERAGLNFKPIIADAGAMGGKDSQEFIAITDDRINLEKWLVLSKNITSIDEIPESVLSEIQEELGKWLVAGEDTIVYAEGGDYAANIEMATSQFEPNVAYTEELELEKVATPGAKTIDEVSDFLEIDEEQTVKTLVYHADDELIVILLNGNDQLNEVKLTNHLGASFIEAASEAEVEEKFGAHFGSLGPIGLENVRIIADRKVELIKNAVVGANVDGYHYKNANFGRDFEVEEFVDLRTVNEGEISPDGRGTLKFARGIEIGHIFKLGTRYTEAMNANILDANGRSIPMLMGCYGIGVSRLLSAILEQFARIYVEKTPREEFKFSWSINFPKELAPFDIHLVPVNVKDEAAMELTSELEEKLRGKGYQVLVDDRNERAGVKFADSDLIGLPVRVTIGKKAAEGIVEVKIRATGEVVEINKDELVNTIEILSK.

This sequence belongs to the class-II aminoacyl-tRNA synthetase family. ProS type 1 subfamily. As to quaternary structure, homodimer.

The protein resides in the cytoplasm. The enzyme catalyses tRNA(Pro) + L-proline + ATP = L-prolyl-tRNA(Pro) + AMP + diphosphate. In terms of biological role, catalyzes the attachment of proline to tRNA(Pro) in a two-step reaction: proline is first activated by ATP to form Pro-AMP and then transferred to the acceptor end of tRNA(Pro). As ProRS can inadvertently accommodate and process non-cognate amino acids such as alanine and cysteine, to avoid such errors it has two additional distinct editing activities against alanine. One activity is designated as 'pretransfer' editing and involves the tRNA(Pro)-independent hydrolysis of activated Ala-AMP. The other activity is designated 'posttransfer' editing and involves deacylation of mischarged Ala-tRNA(Pro). The misacylated Cys-tRNA(Pro) is not edited by ProRS. This Lactococcus lactis subsp. cremoris (strain MG1363) protein is Proline--tRNA ligase.